Consider the following 181-residue polypeptide: Adenine phosphoribosyltransferase (181 aa).

This sequence belongs to the purine/pyrimidine phosphoribosyltransferase family. As to quaternary structure, homodimer.

Its subcellular location is the cytoplasm. The enzyme catalyses AMP + diphosphate = 5-phospho-alpha-D-ribose 1-diphosphate + adenine. Its pathway is purine metabolism; AMP biosynthesis via salvage pathway; AMP from adenine: step 1/1. Catalyzes a salvage reaction resulting in the formation of AMP, that is energically less costly than de novo synthesis. This Methylorubrum extorquens (strain CM4 / NCIMB 13688) (Methylobacterium extorquens) protein is Adenine phosphoribosyltransferase.